A 237-amino-acid chain; its full sequence is Uridylate kinase (237 aa).

12–15 serves as a coordination point for ATP; that stretch reads KLSG. The tract at residues 20–25 is involved in allosteric activation by GTP; that stretch reads GEDGLG. Residue Gly-54 coordinates UMP. Gly-55 and Arg-59 together coordinate ATP. Residues Asp-74 and 135–142 contribute to the UMP site; that span reads TGNPFFTT. 3 residues coordinate ATP: Thr-162, Tyr-168, and Asp-171.

It belongs to the UMP kinase family. Homohexamer.

It localises to the cytoplasm. It carries out the reaction UMP + ATP = UDP + ADP. It functions in the pathway pyrimidine metabolism; CTP biosynthesis via de novo pathway; UDP from UMP (UMPK route): step 1/1. Allosterically activated by GTP. Inhibited by UTP. In terms of biological role, catalyzes the reversible phosphorylation of UMP to UDP. This is Uridylate kinase from Haemophilus influenzae (strain PittGG).